The following is a 472-amino-acid chain: Estrogen receptor beta (472 aa).

Residues 1–104 (MAFCSPAMMN…NPGSKRDAHF (104 aa)) are modulating. 2 consecutive NR C4-type zinc fingers follow at residues 105-125 (CAVC…CEGC) and 141-165 (CPAT…LRKC). The nuclear receptor DNA-binding region spans 105–170 (CAVCSDYASG…RLRKCYEVGM (66 aa)). In terms of domain architecture, NR LBD spans 217-449 (SPEQFVLTLL…DLLLEMLNAH (233 aa)).

The protein belongs to the nuclear hormone receptor family. NR3 subfamily. As to quaternary structure, binds DNA as a homodimer. Can form a heterodimer with ER-alpha. As to expression, a high expression is seen in the telencephalon, diencephalon, pituitary, testis and kidneys but little or no expression is seen in the cerebellum, pectoral muscle and adrenal gland.

The protein localises to the nucleus. Functionally, binds estrogens with an affinity similar to that of ER-alpha, and activates expression of reporter genes containing estrogen response elements (ERE) in an estrogen-dependent manner. The chain is Estrogen receptor beta (ESR2) from Coturnix japonica (Japanese quail).